The sequence spans 314 residues: Malate dehydrogenase (314 aa).

NAD(+) is bound by residues 11–16 (GSGNIG) and D35. Substrate is bound by residues R84 and R90. NAD(+) is bound by residues N97 and 120-122 (ITN). The substrate site is built by N122 and R153. The active-site Proton acceptor is the H177.

Belongs to the LDH/MDH superfamily. MDH type 3 family.

It carries out the reaction (S)-malate + NAD(+) = oxaloacetate + NADH + H(+). Its function is as follows. Catalyzes the reversible oxidation of malate to oxaloacetate. This is Malate dehydrogenase from Rickettsia felis (strain ATCC VR-1525 / URRWXCal2) (Rickettsia azadi).